A 470-amino-acid chain; its full sequence is Glucose-1-phosphate adenylyltransferase large subunit 1 (470 aa).

It belongs to the bacterial/plant glucose-1-phosphate adenylyltransferase family. In terms of assembly, heterotetramer. Prominently expressed in the leaves and a weaker expression is seen in the tubers.

It localises to the plastid. The protein localises to the chloroplast. It is found in the amyloplast. It carries out the reaction alpha-D-glucose 1-phosphate + ATP + H(+) = ADP-alpha-D-glucose + diphosphate. The protein operates within glycan biosynthesis; starch biosynthesis. Activated by 3'phosphoglycerate, inhibited by orthophosphate. Allosteric regulation. This protein plays a role in synthesis of starch. It catalyzes the synthesis of the activated glycosyl donor, ADP-glucose from Glc-1-P and ATP. The polypeptide is Glucose-1-phosphate adenylyltransferase large subunit 1 (AGPS1) (Solanum tuberosum (Potato)).